Here is an 86-residue protein sequence, read N- to C-terminus: Large ribosomal subunit protein bL31B (86 aa).

This sequence belongs to the bacterial ribosomal protein bL31 family. Type B subfamily. As to quaternary structure, part of the 50S ribosomal subunit.

The protein is Large ribosomal subunit protein bL31B of Ralstonia pickettii (strain 12J).